We begin with the raw amino-acid sequence, 316 residues long: Ribosomal RNA small subunit methyltransferase H (316 aa).

S-adenosyl-L-methionine is bound by residues 35–37 (AGH), Asp-55, Phe-84, Asp-105, and Gln-112.

It belongs to the methyltransferase superfamily. RsmH family.

It is found in the cytoplasm. It carries out the reaction cytidine(1402) in 16S rRNA + S-adenosyl-L-methionine = N(4)-methylcytidine(1402) in 16S rRNA + S-adenosyl-L-homocysteine + H(+). In terms of biological role, specifically methylates the N4 position of cytidine in position 1402 (C1402) of 16S rRNA. This chain is Ribosomal RNA small subunit methyltransferase H, found in Streptococcus pneumoniae serotype 4 (strain ATCC BAA-334 / TIGR4).